We begin with the raw amino-acid sequence, 601 residues long: Phosphomethylpyrimidine synthase (601 aa).

Residues N224, M253, Y282, H318, 338 to 340, 379 to 382, and E418 each bind substrate; these read SRG and DGLR. Residue H422 coordinates Zn(2+). Y445 provides a ligand contact to substrate. H486 contributes to the Zn(2+) binding site. 3 residues coordinate [4Fe-4S] cluster: C566, C569, and C574.

The protein belongs to the ThiC family. Homodimer. It depends on [4Fe-4S] cluster as a cofactor.

It catalyses the reaction 5-amino-1-(5-phospho-beta-D-ribosyl)imidazole + S-adenosyl-L-methionine = 4-amino-2-methyl-5-(phosphooxymethyl)pyrimidine + CO + 5'-deoxyadenosine + formate + L-methionine + 3 H(+). Its pathway is cofactor biosynthesis; thiamine diphosphate biosynthesis. In terms of biological role, catalyzes the synthesis of the hydroxymethylpyrimidine phosphate (HMP-P) moiety of thiamine from aminoimidazole ribotide (AIR) in a radical S-adenosyl-L-methionine (SAM)-dependent reaction. The polypeptide is Phosphomethylpyrimidine synthase (Xylella fastidiosa (strain 9a5c)).